Here is a 545-residue protein sequence, read N- to C-terminus: MVAEAGSMPAASSVKKPFGLRSKMGKWCRHCFAWCRGSGKSNVGTSGDHDDSAMKTLRSKMGKWCCHCFPWCRGSGKSNVGTSGDHDDSAMKTLRSKMGKWCCHCFPCCRGSGKSNVGTSGDHDDSAMKTLRSKMGKWCCHCFPCCRGSGKNKVGPWGDYDDSAFMEPRYHVRREDLDKLHRAAWWGKVPRKDLIVMLKDTDMNKKDKQKRTALHLASANGNSEVVKLLLDRRCQLNILDNKKRTALTKAVQCQEDECALMLLEHGTDPNIPDEYGNTALHYAIYNEDKLMAKALLLYGADIESKNKHGLTPLLLGVHEQKQQVVKFLIKKKANLNALDRYGRTALILAVCCGSASIVSLLLEQNIDVSSQDLSGQTAREYAVSSRHNVICQLLSDYKEKQILKVSSENSNPEQDLKLTSEEESQRLKGSENSQPEEMSQEPEINKGGDRKVEEEMKKHGSTHMGFPENLTNGATADNGDDGLIPPRKSRTPESQQFPDTENEQYHSDEQNDTQKQLSEEQNTGILQDEILIHEEKQIEVAENEF.

ANK repeat units lie at residues 180-208 (LHRA…KKDK), 209-238 (QKRT…QLNI), 242-271 (KKRT…DPNI), 275-304 (YGNT…DIES), 308-337 (HGLT…NLNA), 341-370 (YGRT…DVSS), and 374-404 (SGQT…QILK). Residues 406–524 (SSENSNPEQD…KQLSEEQNTG (119 aa)) are disordered. Composition is skewed to basic and acidic residues over residues 414–429 (QDLK…RLKG) and 443–458 (EINK…EMKK). Over residues 513–524 (TQKQLSEEQNTG) the composition is skewed to polar residues.

It belongs to the POTE family.

This Homo sapiens (Human) protein is POTE ankyrin domain family member H (POTEH).